We begin with the raw amino-acid sequence, 169 residues long: Fumarase E (169 aa).

Belongs to the MtlR/FumE family. As to quaternary structure, homodimer.

The enzyme catalyses (S)-malate = fumarate + H2O. In vitro catalyzes the addition of water to fumarate, forming malate. Cannot catalyze the reverse reaction. Cannot use the cis-isomer maleate as substrate. In Shigella flexneri, this protein is Fumarase E.